The following is a 378-amino-acid chain: Histidine decarboxylase (378 aa).

Position 120 (His120) interacts with substrate. Residue Lys233 is modified to N6-(pyridoxal phosphate)lysine.

Belongs to the group II decarboxylase family. As to quaternary structure, homotetramer. It depends on pyridoxal 5'-phosphate as a cofactor.

It carries out the reaction L-histidine + H(+) = histamine + CO2. The protein is Histidine decarboxylase (hdc) of Klebsiella aerogenes (Enterobacter aerogenes).